The sequence spans 234 residues: Protein-toxin resistance protein KTD1 (234 aa).

Residues 1–47 lie on the Cytoplasmic side of the membrane; it reads MQTPSENTDVKMDTLDEPSAHLIEENVALPEDTFSSHLSYVLYEIAH. A helical membrane pass occupies residues 48–68; the sequence is CKPIMFMIIIIVSLISLIVLF. The tract at residues 68–75 is required for resistance to killer toxin K28, a protein-toxin encoded by the M28 virus; the sequence is FHDNDGCT. At 69–76 the chain is on the extracellular side; sequence HDNDGCTV. Residues 77 to 97 form a helical membrane-spanning segment; that stretch reads ILVMSLIVASMALMVVAAFTF. At 98-234 the chain is on the cytoplasmic side; it reads GKAITEQEFM…RKQYPDADLP (137 aa). The interval 147–234 is required for resistance to killer toxin K28, a protein-toxin encoded by the M28 virus; that stretch reads FYSGKKCHEF…RKQYPDADLP (88 aa). The interval 168–187 is disordered; that stretch reads SHSDSSSNSAEDTQSPVSAG. The segment covering 177-187 has biased composition (polar residues); sequence AEDTQSPVSAG. K217 participates in a covalent cross-link: Glycyl lysine isopeptide (Lys-Gly) (interchain with G-Cter in ubiquitin).

The protein belongs to the DUP/COS family.

It localises to the vacuole membrane. It is found in the golgi apparatus. The protein resides in the trans-Golgi network membrane. The protein localises to the endosome membrane. Its function is as follows. Confers resistance to killer toxin K28, a protein-toxin encoded by the M28 virus that uses S.cerevisiae as a host. Probably acts against K28 after endocytosis of the protein-toxin. The sequence is that of Protein-toxin resistance protein KTD1 from Saccharomyces cerevisiae (strain ATCC 204508 / S288c) (Baker's yeast).